Reading from the N-terminus, the 868-residue chain is MGLSWALLPFLLLAFRAELLALQPALGSQPPSASSSHSMGSSRDFVSNVSSSQHPQPPGSEASAGIPDSNRFPQGLNSSHVPGLFRTNVSAEEQYLSPDVTSSETPPSRVSLDGLDSQDPDKDSGLPFLVKTPASQISVQTPDTKVPTKASGSKLSLEHHNLEPGSKISSEIYQAASFPQQVGGPLAVLVGTTIRLPLTPVPSSSPPAPLVVWRRGSKVLAAGGLGSQAPLISLDPMHQARLRFDQIRGGLELTSARLDDAGVYTVEVIRGGVSQQIREFVVGVFEPLPQLSVQPRAPETEEGAAELRLSCVGWNPGSGKLSWSRDGRALGTSDPEGAEPPRIRTERDQLLISRPVRSDHARYTCQVRSPFGHTEAAADVSVFYGPDAPVIRVSSDRDASPALYVTAGSNVTLHCSAPSRPPADIAWSLADPTEAAVPAGPRLLLPAVGPGHGGAYACIAANPRTGHRRRSVFNLTVADLPPGAPQCSVEGGPVDRSLRFRCSWPGGVPAASLQFQGLPEGVRAGPVPSTLLVTVPARPELSGVAVTCLARHLVATRTCTIIPEAPQEVLLQPIVEETQPGDVVVALEVTGCPPPSRASWARQGRPLAPGGGGRLQLSQDGRKLLINNFSLDWDLGNYSVLCSSALGAGGNQITLTGPSISSWRLQRAQEAAVLTWDVERGTLLTGFHIQAWTDSSEVDRVTMSRDWVSLLILGPQERSAIVPLPPRNPGTWAFRILPILGSLPGTPSQSRVYQAGSDLSPGAIAGIVLGSLLGLALLAGLLILCICCLRRYPGRASVKKQHSLTLAPVLTPPAKKIQSLTPVQTPRPLPIKTKMQSPHPAKAQQVISPSPTLCPGGSPWTVRAATQV.

An N-terminal signal peptide occupies residues Met1–Gly27. The span at Leu26 to Ser52 shows a compositional bias: low complexity. The tract at residues Leu26–Pro82 is disordered. Topologically, residues Ser28–Ala763 are extracellular. N-linked (GlcNAc...) asparagine glycosylation is found at Asn48, Asn77, and Asn88. Over residues Arg71–His80 the composition is skewed to polar residues. 2 disordered regions span residues Leu96–Lys154 and Trp323–Arg342. Composition is skewed to polar residues over residues Asp99–Ser108 and Pro133–Asp143. 2 Ig-like C2-type domains span residues Pro289–Ser381 and Pro389–Asn474. A disulfide bridge connects residues Cys311 and Cys365. N-linked (GlcNAc...) asparagine glycosylation occurs at Asn410. Cys415 and Cys458 are joined by a disulfide. N-linked (GlcNAc...) asparagine glycans are attached at residues Asn474, Asn628, and Asn637. Residues Ile764 to Leu784 form a helical membrane-spanning segment. The Cytoplasmic portion of the chain corresponds to Cys785–Val868.

It localises to the membrane. In Mus musculus (Mouse), this protein is V-set and immunoglobulin domain-containing protein 10-like (Vsig10l).